The sequence spans 299 residues: Cysteine synthase B (299 aa).

Lys40 is subject to N6-(pyridoxal phosphate)lysine. Pyridoxal 5'-phosphate is bound by residues Asn70, 174-178 (GTGGT), and Ser261.

It belongs to the cysteine synthase/cystathionine beta-synthase family. Pyridoxal 5'-phosphate serves as cofactor.

It catalyses the reaction O-acetyl-L-serine + hydrogen sulfide = L-cysteine + acetate. It functions in the pathway amino-acid biosynthesis; L-cysteine biosynthesis; L-cysteine from L-serine: step 2/2. The sequence is that of Cysteine synthase B (cysM) from Campylobacter jejuni subsp. jejuni serotype O:2 (strain ATCC 700819 / NCTC 11168).